Consider the following 343-residue polypeptide: Phosphatidylglycerol--prolipoprotein diacylglyceryl transferase 1 (343 aa).

4 consecutive transmembrane segments (helical) span residues 19-39 (VPLRGYAFCIIIGVFVAVWLG), 54-74 (ADIAVWAVPFGLIGGRLYHVI), 93-113 (IWEGGLGIWGAIAFGAVGAWI), and 119-139 (GVPMPAYADAVAPGIALAQAI). Arginine 141 serves as a coordination point for a 1,2-diacyl-sn-glycero-3-phospho-(1'-sn-glycerol). Transmembrane regions (helical) follow at residues 176–196 (HPTFLYESLWCIGVALLVIWA), 202–224 (LGHGRAFALYVAAYCAGRFWIEY), and 238–258 (LNNWTALFVFLLAVLYIVLSA). Residues 269 to 343 (EPGAETAAGD…TNGADSAKKG (75 aa)) form a disordered region. Residues 283–293 (ADKDVKGTKDA) are compositionally biased toward basic and acidic residues. Acidic residues predominate over residues 314 to 324 (APEDTSGADEA).

This sequence belongs to the Lgt family.

The protein resides in the cell membrane. The catalysed reaction is L-cysteinyl-[prolipoprotein] + a 1,2-diacyl-sn-glycero-3-phospho-(1'-sn-glycerol) = an S-1,2-diacyl-sn-glyceryl-L-cysteinyl-[prolipoprotein] + sn-glycerol 1-phosphate + H(+). It participates in protein modification; lipoprotein biosynthesis (diacylglyceryl transfer). In terms of biological role, catalyzes the transfer of the diacylglyceryl group from phosphatidylglycerol to the sulfhydryl group of the N-terminal cysteine of a prolipoprotein, the first step in the formation of mature lipoproteins. This Streptomyces coelicolor (strain ATCC BAA-471 / A3(2) / M145) protein is Phosphatidylglycerol--prolipoprotein diacylglyceryl transferase 1.